Here is a 277-residue protein sequence, read N- to C-terminus: 3-methyl-2-oxobutanoate hydroxymethyltransferase (277 aa).

2 residues coordinate Mg(2+): D43 and D82. 3-methyl-2-oxobutanoate contacts are provided by residues 43–44 (DS), D82, and K112. Residue E114 participates in Mg(2+) binding. The Proton acceptor role is filled by E181.

Belongs to the PanB family. Homodecamer; pentamer of dimers. The cofactor is Mg(2+).

It is found in the cytoplasm. It carries out the reaction 3-methyl-2-oxobutanoate + (6R)-5,10-methylene-5,6,7,8-tetrahydrofolate + H2O = 2-dehydropantoate + (6S)-5,6,7,8-tetrahydrofolate. It functions in the pathway cofactor biosynthesis; (R)-pantothenate biosynthesis; (R)-pantoate from 3-methyl-2-oxobutanoate: step 1/2. Functionally, catalyzes the reversible reaction in which hydroxymethyl group from 5,10-methylenetetrahydrofolate is transferred onto alpha-ketoisovalerate to form ketopantoate. This Listeria monocytogenes serotype 4b (strain CLIP80459) protein is 3-methyl-2-oxobutanoate hydroxymethyltransferase.